The primary structure comprises 624 residues: Vitamin B12 transporter BtuB (624 aa).

The N-terminal stretch at 1 to 21 is a signal peptide; sequence MTIKKYTLLTALSVTAFSGWA. The TonB box motif lies at 31 to 38; it reads NEMVVTAN. The TBDR plug domain occupies 43–157; that stretch reads PKSSVLAPVD…IGGVVNIITE (115 aa). Cyanocob(III)alamin-binding positions include Leu88, Ser90, Asn97, and 115 to 116; that span reads IS. The TBDR beta-barrel domain occupies 160–624; the sequence is TLGSTLTAGL…EYYFTGSYNF (465 aa). 3 consecutive transmembrane segments (beta stranded) span residues 163–170, 174–183, and 189–200; these read STLTAGLG, YQNYNGSTQQ, and TTITLAGNYDYS. Residues Asp204, Gln216, Asp218, and Asp220 each coordinate Ca(2+). The next 2 membrane-spanning stretches (beta stranded) occupy residues 222 to 232 and 237 to 253; these read YLGKMLWLGAN and EQFSGFVRGYGFDNRSD. Ca(2+) is bound by residues Tyr254, Asp255, and Asp266. 17 beta stranded membrane-spanning segments follow: residues 268–282, 284–301, 314–330, 333–342, 358–374, 376–386, 390–405, 408–422, 440–449, 455–464, 481–498, 502–517, 525–537, 543–557, 568–582, 595–606, and 612–624; these read RSLSSRTYDTGINFS, GGYASQLIGSYSRTQDYN, TLDDISQYNLQWTNTYQ, LGNVGGGLDW, YEQRNTGVYGTVQQFVG, VTLEGAIRGDD, FGWHTTWQSSAGWEFV, YRLIGSYGTAFKAPN, ESTQWEAAIT, LDWRLSAYRN, YYNVEKATIKGVEWTGSF, PLSHQVTLEYLDPRNA, RRAKQQVKYQLDW, DWSVTYQYIGQRYDS, PVKLAGISLWDLAVS, IANLFDKDYEMV, and PGREYYFTGSYNF. Residue Thr314 participates in cyanocob(III)alamin binding. A cyanocob(III)alamin-binding site is contributed by Arg525. A TonB C-terminal box motif is present at residues 607-624; it reads YGYQTPGREYYFTGSYNF.

The protein belongs to the TonB-dependent receptor family. BtuB (TC 1.B.14.3.1) subfamily.

The protein resides in the cell outer membrane. Functionally, involved in the active translocation of vitamin B12 (cyanocobalamin) across the outer membrane to the periplasmic space. It derives its energy for transport by interacting with the trans-periplasmic membrane protein TonB. The polypeptide is Vitamin B12 transporter BtuB (Yersinia pseudotuberculosis serotype O:1b (strain IP 31758)).